Reading from the N-terminus, the 291-residue chain is N-acetylmannosamine kinase (291 aa).

Residues 5–12 (AIDIGGTK) and 132–139 (GVGGGVVS) contribute to the ATP site. Zn(2+) is bound by residues His156, Cys166, Cys168, and Cys173.

Belongs to the ROK (NagC/XylR) family. NanK subfamily. Homodimer.

It catalyses the reaction an N-acyl-D-mannosamine + ATP = an N-acyl-D-mannosamine 6-phosphate + ADP + H(+). It functions in the pathway amino-sugar metabolism; N-acetylneuraminate degradation; D-fructose 6-phosphate from N-acetylneuraminate: step 2/5. Catalyzes the phosphorylation of N-acetylmannosamine (ManNAc) to ManNAc-6-P. This is N-acetylmannosamine kinase from Escherichia coli (strain SE11).